Here is a 342-residue protein sequence, read N- to C-terminus: Delta-aminolevulinic acid dehydratase (342 aa).

Cysteine 133, cysteine 135, and cysteine 143 together coordinate Zn(2+). Lysine 210 functions as the Schiff-base intermediate with substrate in the catalytic mechanism. 2 residues coordinate 5-aminolevulinate: arginine 220 and arginine 232. A Phosphoserine modification is found at serine 254. Lysine 263 (schiff-base intermediate with substrate) is an active-site residue. 2 residues coordinate 5-aminolevulinate: serine 290 and tyrosine 329.

This sequence belongs to the ALAD family. As to quaternary structure, homooctamer. Zn(2+) serves as cofactor.

The enzyme catalyses 2 5-aminolevulinate = porphobilinogen + 2 H2O + H(+). It participates in porphyrin-containing compound metabolism; protoporphyrin-IX biosynthesis; coproporphyrinogen-III from 5-aminolevulinate: step 1/4. Its activity is regulated as follows. Inhibited by divalent lead ions. Catalyzes an early step in the biosynthesis of tetrapyrroles. Binds two molecules of 5-aminolevulinate per subunit, each at a distinct site, and catalyzes their condensation to form porphobilinogen. This Saccharomyces cerevisiae (strain ATCC 204508 / S288c) (Baker's yeast) protein is Delta-aminolevulinic acid dehydratase (HEM2).